Here is a 325-residue protein sequence, read N- to C-terminus: Elongation factor P--(R)-beta-lysine ligase (325 aa).

Position 76–78 (76–78 (SPE)) interacts with substrate. ATP contacts are provided by residues 100–102 (RNE) and asparagine 109. Tyrosine 118 lines the substrate pocket. 244 to 245 (EL) contributes to the ATP binding site. Residue glutamate 251 participates in substrate binding. Glycine 300 is an ATP binding site.

This sequence belongs to the class-II aminoacyl-tRNA synthetase family. EpmA subfamily. Homodimer.

It carries out the reaction D-beta-lysine + L-lysyl-[protein] + ATP = N(6)-((3R)-3,6-diaminohexanoyl)-L-lysyl-[protein] + AMP + diphosphate + H(+). In terms of biological role, with EpmB is involved in the beta-lysylation step of the post-translational modification of translation elongation factor P (EF-P). Catalyzes the ATP-dependent activation of (R)-beta-lysine produced by EpmB, forming a lysyl-adenylate, from which the beta-lysyl moiety is then transferred to the epsilon-amino group of a conserved specific lysine residue in EF-P. This is Elongation factor P--(R)-beta-lysine ligase from Erwinia tasmaniensis (strain DSM 17950 / CFBP 7177 / CIP 109463 / NCPPB 4357 / Et1/99).